Reading from the N-terminus, the 115-residue chain is MNRELGLWGEELAAQYLRKKGYKILERNFHTRYGELDLVCEKDDNIVFVEVKTRRSTRFGSPEEAVTPRKIGNLKKAAILYLKSTPRFFPEISFDVVSILVEDGKSKINHIINAF.

Belongs to the UPF0102 family.

This is UPF0102 protein Swol_1475 from Syntrophomonas wolfei subsp. wolfei (strain DSM 2245B / Goettingen).